The chain runs to 89 residues: MAQSAVVKNEIIEKFKTHEGDTGSSEVQIALLTDRIQYLTDHFKTHKKDHHSRQGLLKLVGQRRSLLDYLKKKNVTTYRELIKALGIRK.

It belongs to the universal ribosomal protein uS15 family. Part of the 30S ribosomal subunit. Forms a bridge to the 50S subunit in the 70S ribosome, contacting the 23S rRNA.

Functionally, one of the primary rRNA binding proteins, it binds directly to 16S rRNA where it helps nucleate assembly of the platform of the 30S subunit by binding and bridging several RNA helices of the 16S rRNA. Forms an intersubunit bridge (bridge B4) with the 23S rRNA of the 50S subunit in the ribosome. The chain is Small ribosomal subunit protein uS15 from Desulfotalea psychrophila (strain LSv54 / DSM 12343).